Consider the following 345-residue polypeptide: Platelet-derived growth factor C (345 aa).

An N-terminal signal peptide occupies residues 1 to 22 (MLLFGFLLLTFALVSQRQGAEA). 2 N-linked (GlcNAc...) asparagine glycosylation sites follow: Asn25 and Asn55. The CUB domain maps to 46–163 (HEKIITVSAN…PGFCIHYTLL (118 aa)). Disulfide bonds link Cys104/Cys124, Cys250/Cys294, Cys280/Cys335, and Cys287/Cys337.

Belongs to the PDGF/VEGF growth factor family. Homodimer; disulfide-linked. Interacts with PDGFRA homodimers, and with heterodimers formed by PDGFRA and PDGFRB. Post-translationally, proteolytic removal of the N-terminal CUB domain releasing the core domain is necessary for unmasking the receptor-binding epitopes of the core domain. Cleavage after basic residues in the hinge region (region connecting the CUB and growth factor domains) gives rise to the receptor-binding form.

It is found in the secreted. Growth factor that plays an essential role in the regulation of embryonic development, cell proliferation, cell migration, survival and chemotaxis. Potent mitogen and chemoattractant for cells of mesenchymal origin. Required for normal skeleton formation during embryonic development. Required for normal skin morphogenesis during embryonic development. Plays an important role in wound healing, in angiogenesis and blood vessel development. The protein is Platelet-derived growth factor C (PDGFC) of Gekko japonicus (Schlegel's Japanese gecko).